Consider the following 230-residue polypeptide: UPF0173 metal-dependent hydrolase Acid_3917 (230 aa).

The protein belongs to the UPF0173 family.

The chain is UPF0173 metal-dependent hydrolase Acid_3917 from Solibacter usitatus (strain Ellin6076).